The following is a 145-amino-acid chain: 3-hydroxyacyl-[acyl-carrier-protein] dehydratase FabZ (145 aa).

Histidine 47 is an active-site residue.

The protein belongs to the thioester dehydratase family. FabZ subfamily.

Its subcellular location is the cytoplasm. The enzyme catalyses a (3R)-hydroxyacyl-[ACP] = a (2E)-enoyl-[ACP] + H2O. In terms of biological role, involved in unsaturated fatty acids biosynthesis. Catalyzes the dehydration of short chain beta-hydroxyacyl-ACPs and long chain saturated and unsaturated beta-hydroxyacyl-ACPs. This is 3-hydroxyacyl-[acyl-carrier-protein] dehydratase FabZ from Aromatoleum aromaticum (strain DSM 19018 / LMG 30748 / EbN1) (Azoarcus sp. (strain EbN1)).